The chain runs to 44 residues: U9-ctenitoxin-Co1a (44 aa).

4 disulfide bridges follow: Cys3/Cys17, Cys10/Cys23, Cys16/Cys33, and Cys25/Cys31.

As to expression, expressed by the venom gland.

It is found in the secreted. In terms of biological role, insecticidal neurotoxin that reversibly inhibits the N-methyl-D-aspartate (NMDA)-subtype of ionotropic glutamate receptor (GRIN) and inhibits inactivation of insect sodium channels (Nav). In vivo, is highly toxic to insects. This chain is U9-ctenitoxin-Co1a, found in Ctenus ornatus (Brazilian spider).